A 359-amino-acid polypeptide reads, in one-letter code: DNA replication and repair protein RecF (359 aa).

30 to 37 contributes to the ATP binding site; the sequence is GPNGSGKT.

This sequence belongs to the RecF family.

The protein localises to the cytoplasm. Its function is as follows. The RecF protein is involved in DNA metabolism; it is required for DNA replication and normal SOS inducibility. RecF binds preferentially to single-stranded, linear DNA. It also seems to bind ATP. The sequence is that of DNA replication and repair protein RecF from Aliivibrio fischeri (strain MJ11) (Vibrio fischeri).